The chain runs to 413 residues: Histidine--tRNA ligase (413 aa).

Belongs to the class-II aminoacyl-tRNA synthetase family. In terms of assembly, homodimer.

The protein localises to the cytoplasm. The enzyme catalyses tRNA(His) + L-histidine + ATP = L-histidyl-tRNA(His) + AMP + diphosphate + H(+). The chain is Histidine--tRNA ligase (hisS) from Rickettsia prowazekii (strain Madrid E).